The following is a 913-amino-acid chain: Rab GTPase-activating protein tbc-8 (913 aa).

The tract at residues 1–24 (MQMFRHSSADMWRAKKPTLERRST) is disordered. One can recognise an RUN domain in the interval 106–240 (NLNSPYVTSL…TYRRMSNRIE (135 aa)). Residues 597-844 (INTKEVRRMA…KVWEVIWAAQ (248 aa)) form the Rab-GAP TBC domain.

It belongs to the RUTBC family. As to quaternary structure, interacts with rab-19. Interacts with ric-19; the interaction is direct and may be required for the activation of rab-2 and dense vesicle maturation in cholinergic motoneurons. Interacts (via RUN domain) with rund-1. Does not interact with unc-108 (GTP-bound form). Expressed in neurons in the head, tail and ventral nerve cord (at protein level).

It localises to the golgi apparatus. Its subcellular location is the trans-Golgi network. It is found in the early endosome. The protein localises to the cytoplasmic vesicle membrane. Functionally, interacts with numerous Rab family members, functioning as Rab effector for some, and as GTPase activator for others. GTPase activator for rab-2. In association with ric-19 activates rab-2 during dense core vesicle maturation in cholinergic motoneurons. The protein is Rab GTPase-activating protein tbc-8 of Caenorhabditis elegans.